The following is a 117-amino-acid chain: Protein Aeq5-like2 (117 aa).

Residues 1-36 (MLVNARAIRQSIGIVVAQCRRDLESNRTLDYRTRMR) are Cytoplasmic-facing. Residues 37 to 56 (TSLILVAMVMVSVLLPYTYG) form a helical membrane-spanning segment. The Extracellular segment spans residues 57-117 (SSCDSFCTEQ…RFTKEPTEES (61 aa)). Cystine bridges form between Cys59–Cys94, Cys63–Cys90, Cys70–Cys83, and Cys74–Cys80.

In terms of processing, the mature peptide may be cleaved at a dibasic residue site and be shorter than the sequence shown (possibly residues 1-94). Expressed in endodermal ganglion neurons, apparently bipolar and following mesentery folds (observed in both planulae and primary polyps). It not expressed in nematocytes.

It localises to the membrane. The polypeptide is Protein Aeq5-like2 (Nematostella vectensis (Starlet sea anemone)).